The following is a 368-amino-acid chain: uncharacterized protein (368 aa).

It belongs to the CdaR family.

This is an uncharacterized protein from Haemophilus influenzae (strain ATCC 51907 / DSM 11121 / KW20 / Rd).